The chain runs to 383 residues: Succinyl-diaminopimelate desuccinylase (383 aa).

Residue H73 coordinates Zn(2+). D75 is an active-site residue. A Zn(2+)-binding site is contributed by D107. Catalysis depends on E141, which acts as the Proton acceptor. E142, E170, and H356 together coordinate Zn(2+).

The protein belongs to the peptidase M20A family. DapE subfamily. Homodimer. Requires Zn(2+) as cofactor. The cofactor is Co(2+).

The enzyme catalyses N-succinyl-(2S,6S)-2,6-diaminopimelate + H2O = (2S,6S)-2,6-diaminopimelate + succinate. It functions in the pathway amino-acid biosynthesis; L-lysine biosynthesis via DAP pathway; LL-2,6-diaminopimelate from (S)-tetrahydrodipicolinate (succinylase route): step 3/3. Its function is as follows. Catalyzes the hydrolysis of N-succinyl-L,L-diaminopimelic acid (SDAP), forming succinate and LL-2,6-diaminopimelate (DAP), an intermediate involved in the bacterial biosynthesis of lysine and meso-diaminopimelic acid, an essential component of bacterial cell walls. The sequence is that of Succinyl-diaminopimelate desuccinylase from Pseudomonas syringae pv. syringae (strain B728a).